We begin with the raw amino-acid sequence, 302 residues long: tRNA pseudouridine synthase B (302 aa).

Catalysis depends on Asp47, which acts as the Nucleophile.

It belongs to the pseudouridine synthase TruB family. Type 1 subfamily.

It catalyses the reaction uridine(55) in tRNA = pseudouridine(55) in tRNA. Functionally, responsible for synthesis of pseudouridine from uracil-55 in the psi GC loop of transfer RNAs. The chain is tRNA pseudouridine synthase B from Ruegeria sp. (strain TM1040) (Silicibacter sp.).